The sequence spans 139 residues: Putative pre-16S rRNA nuclease (139 aa).

This sequence belongs to the YqgF nuclease family.

It is found in the cytoplasm. Functionally, could be a nuclease involved in processing of the 5'-end of pre-16S rRNA. The protein is Putative pre-16S rRNA nuclease of Dictyoglomus thermophilum (strain ATCC 35947 / DSM 3960 / H-6-12).